Consider the following 361-residue polypeptide: Molybdenum import ATP-binding protein ModC (361 aa).

An ABC transporter domain is found at 1 to 228 (MLNINIEKQF…EQMRPWVPLQ (228 aa)). 31-38 (GRSGAGKT) contributes to the ATP binding site. Residues 289 to 356 (GSSIRNLLRG…IKGVTMTQMD (68 aa)) form the Mop domain.

This sequence belongs to the ABC transporter superfamily. Molybdate importer (TC 3.A.1.8) family. As to quaternary structure, the complex is composed of two ATP-binding proteins (ModC), two transmembrane proteins (ModB) and a solute-binding protein (ModA).

It is found in the cell inner membrane. It catalyses the reaction molybdate(out) + ATP + H2O = molybdate(in) + ADP + phosphate + H(+). In terms of biological role, part of the ABC transporter complex ModABC involved in molybdenum import. Responsible for energy coupling to the transport system. This is Molybdenum import ATP-binding protein ModC from Shewanella sp. (strain MR-4).